A 364-amino-acid polypeptide reads, in one-letter code: Probable transcription factor At4g00390 (364 aa).

Residues 1–149 (MTKKLDPPTA…STKRVKKDEE (149 aa)) form a disordered region. Over residues 13-32 (SDEDDVETSEDDSSSSEEDE) the composition is skewed to acidic residues. Residues 39 to 80 (ATTAAAPAKSTAVSAATPAKSTSVSAAAPSKSTAVSAAADSD) are compositionally biased toward low complexity. The segment covering 81 to 93 (SGSESETDSDSES) has biased composition (acidic residues).

It belongs to the GeBP family.

The polypeptide is Probable transcription factor At4g00390 (Arabidopsis thaliana (Mouse-ear cress)).